The following is a 66-amino-acid chain: Large ribosomal subunit protein uL29 (66 aa).

Belongs to the universal ribosomal protein uL29 family.

The protein is Large ribosomal subunit protein uL29 of Thermoplasma volcanium (strain ATCC 51530 / DSM 4299 / JCM 9571 / NBRC 15438 / GSS1).